The chain runs to 421 residues: Imidazolonepropionase (421 aa).

Fe(3+) is bound by residues H81 and H83. 2 residues coordinate Zn(2+): H81 and H83. 3 residues coordinate 4-imidazolone-5-propanoate: R90, Y153, and H186. Residue Y153 coordinates N-formimidoyl-L-glutamate. H251 provides a ligand contact to Fe(3+). A Zn(2+)-binding site is contributed by H251. E254 contacts 4-imidazolone-5-propanoate. D326 contacts Fe(3+). D326 contacts Zn(2+). N-formimidoyl-L-glutamate contacts are provided by N328 and G330. Position 331 (S331) interacts with 4-imidazolone-5-propanoate.

Belongs to the metallo-dependent hydrolases superfamily. HutI family. Zn(2+) serves as cofactor. It depends on Fe(3+) as a cofactor.

The protein localises to the cytoplasm. It catalyses the reaction 4-imidazolone-5-propanoate + H2O = N-formimidoyl-L-glutamate. Its pathway is amino-acid degradation; L-histidine degradation into L-glutamate; N-formimidoyl-L-glutamate from L-histidine: step 3/3. In terms of biological role, catalyzes the hydrolytic cleavage of the carbon-nitrogen bond in imidazolone-5-propanoate to yield N-formimidoyl-L-glutamate. It is the third step in the universal histidine degradation pathway. The chain is Imidazolonepropionase from Streptococcus sanguinis (strain SK36).